The following is a 329-amino-acid chain: Replication factor C small subunit (329 aa).

Position 51-58 (51-58 (GPPGTGKT)) interacts with ATP.

Belongs to the activator 1 small subunits family. RfcS subfamily. In terms of assembly, heteromultimer composed of small subunits (RfcS) and large subunits (RfcL).

Its function is as follows. Part of the RFC clamp loader complex which loads the PCNA sliding clamp onto DNA. The sequence is that of Replication factor C small subunit from Staphylothermus marinus (strain ATCC 43588 / DSM 3639 / JCM 9404 / F1).